The primary structure comprises 72 residues: Beta-defensin 104 (72 aa).

A signal peptide spans 1 to 22 (MQRLVLLLAISLLLYQDLPVRS). Cystine bridges form between C30-C57, C37-C51, and C41-C58.

The protein belongs to the beta-defensin family. High expression in the testis. Gastric antrum exhibited relatively high levels. A lower expression is observed in uterus and neutrophils thyroid gland, lung, and kidney. No detectable expression in other tissues tested.

The protein localises to the secreted. Its function is as follows. Has antimicrobial activity. Synergistic effects with lysozyme and DEFB103. The polypeptide is Beta-defensin 104 (DEFB104A) (Homo sapiens (Human)).